The sequence spans 341 residues: Methionine import ATP-binding protein MetN 1 (341 aa).

In terms of domain architecture, ABC transporter spans 2-241 (IEFRQVSKTF…PKTTIAQNFV (240 aa)). ATP is bound at residue 38–45 (GYSGAGKS).

It belongs to the ABC transporter superfamily. Methionine importer (TC 3.A.1.24) family. As to quaternary structure, the complex is composed of two ATP-binding proteins (MetN), two transmembrane proteins (MetI) and a solute-binding protein (MetQ).

Its subcellular location is the cell membrane. It catalyses the reaction L-methionine(out) + ATP + H2O = L-methionine(in) + ADP + phosphate + H(+). The catalysed reaction is D-methionine(out) + ATP + H2O = D-methionine(in) + ADP + phosphate + H(+). Functionally, part of the ABC transporter complex MetNIQ involved in methionine import. Responsible for energy coupling to the transport system. The protein is Methionine import ATP-binding protein MetN 1 of Staphylococcus aureus (strain USA300).